Here is a 639-residue protein sequence, read N- to C-terminus: mRNA export factor (639 aa).

Disordered stretches follow at residues 1-45 (MQAE…SLES), 63-287 (LLGD…KWGA), and 322-355 (CTAR…SQPR). Residues 142 to 152 (PRRRTHARSRS) show a composition bias toward basic residues. Residues 153 to 169 (PRAGSTSSQQPPSSSGG) are compositionally biased toward low complexity. Basic and acidic residues predominate over residues 175–189 (VRREAGDRETSEKPA). A compositionally biased stretch (polar residues) spans 203 to 215 (HQCQSPPAQTASQ). Basic and acidic residues-rich tracts occupy residues 234–247 (RTPH…HEGA) and 326–348 (DPAR…ERRT). Residues Cys525, His606, Cys610, and Cys615 each coordinate Zn(2+). Residues 525 to 615 (CHLAASKSPL…HANVCRKEEC (91 aa)) form a CHC2-type zinc finger.

It belongs to the HHV-1 ICP27 protein family.

Its subcellular location is the host cytoplasm. The protein localises to the host nucleus. In terms of biological role, multifunctional regulator of the expression of viral genes that mediates nuclear export of viral intronless mRNAs. This immediate early (EI) protein promotes the nuclear export of viral intronless mRNAs. The polypeptide is mRNA export factor (Amazona oratrix (yellow-headed parrot)).